The following is a 329-amino-acid chain: Lipoyl synthase (329 aa).

[4Fe-4S] cluster is bound by residues C72, C77, C83, C98, C102, C105, and S313. The Radical SAM core domain occupies 83 to 303 (CWSHGTATIM…QIGLKKGFFE (221 aa)).

The protein belongs to the radical SAM superfamily. Lipoyl synthase family. Requires [4Fe-4S] cluster as cofactor.

The protein resides in the cytoplasm. The catalysed reaction is [[Fe-S] cluster scaffold protein carrying a second [4Fe-4S](2+) cluster] + N(6)-octanoyl-L-lysyl-[protein] + 2 oxidized [2Fe-2S]-[ferredoxin] + 2 S-adenosyl-L-methionine + 4 H(+) = [[Fe-S] cluster scaffold protein] + N(6)-[(R)-dihydrolipoyl]-L-lysyl-[protein] + 4 Fe(3+) + 2 hydrogen sulfide + 2 5'-deoxyadenosine + 2 L-methionine + 2 reduced [2Fe-2S]-[ferredoxin]. Its pathway is protein modification; protein lipoylation via endogenous pathway; protein N(6)-(lipoyl)lysine from octanoyl-[acyl-carrier-protein]: step 2/2. Functionally, catalyzes the radical-mediated insertion of two sulfur atoms into the C-6 and C-8 positions of the octanoyl moiety bound to the lipoyl domains of lipoate-dependent enzymes, thereby converting the octanoylated domains into lipoylated derivatives. The protein is Lipoyl synthase of Legionella pneumophila (strain Paris).